Here is a 490-residue protein sequence, read N- to C-terminus: Bifunctional protein HldE (490 aa).

The segment at 1–330 (MFDFDDLSQA…RKILPHAYRA (330 aa)) is ribokinase. Residue 205 to 208 (NRKE) coordinates ATP. Residue aspartate 275 is part of the active site. The interval 358-490 (FTNGCFDILH…LVDRARSDQR (133 aa)) is cytidylyltransferase.

It in the N-terminal section; belongs to the carbohydrate kinase PfkB family. This sequence in the C-terminal section; belongs to the cytidylyltransferase family. As to quaternary structure, homodimer.

It catalyses the reaction D-glycero-beta-D-manno-heptose 7-phosphate + ATP = D-glycero-beta-D-manno-heptose 1,7-bisphosphate + ADP + H(+). The enzyme catalyses D-glycero-beta-D-manno-heptose 1-phosphate + ATP + H(+) = ADP-D-glycero-beta-D-manno-heptose + diphosphate. It participates in nucleotide-sugar biosynthesis; ADP-L-glycero-beta-D-manno-heptose biosynthesis; ADP-L-glycero-beta-D-manno-heptose from D-glycero-beta-D-manno-heptose 7-phosphate: step 1/4. Its pathway is nucleotide-sugar biosynthesis; ADP-L-glycero-beta-D-manno-heptose biosynthesis; ADP-L-glycero-beta-D-manno-heptose from D-glycero-beta-D-manno-heptose 7-phosphate: step 3/4. In terms of biological role, catalyzes the phosphorylation of D-glycero-D-manno-heptose 7-phosphate at the C-1 position to selectively form D-glycero-beta-D-manno-heptose-1,7-bisphosphate. Functionally, catalyzes the ADP transfer from ATP to D-glycero-beta-D-manno-heptose 1-phosphate, yielding ADP-D-glycero-beta-D-manno-heptose. The protein is Bifunctional protein HldE of Bradyrhizobium sp. (strain ORS 278).